A 491-amino-acid polypeptide reads, in one-letter code: 3-octaprenyl-4-hydroxybenzoate carboxy-lyase (491 aa).

N172 provides a ligand contact to Mn(2+). Prenylated FMN contacts are provided by residues 175-177 (IYR), 189-191 (RWL), and 194-195 (RG). E238 contributes to the Mn(2+) binding site. D287 acts as the Proton donor in catalysis.

It belongs to the UbiD family. In terms of assembly, homohexamer. Requires prenylated FMN as cofactor. The cofactor is Mn(2+).

The protein resides in the cell membrane. The catalysed reaction is a 4-hydroxy-3-(all-trans-polyprenyl)benzoate + H(+) = a 2-(all-trans-polyprenyl)phenol + CO2. Its pathway is cofactor biosynthesis; ubiquinone biosynthesis. Catalyzes the decarboxylation of 3-octaprenyl-4-hydroxy benzoate to 2-octaprenylphenol, an intermediate step in ubiquinone biosynthesis. This is 3-octaprenyl-4-hydroxybenzoate carboxy-lyase from Histophilus somni (strain 129Pt) (Haemophilus somnus).